The chain runs to 76 residues: uncharacterized protein (76 aa).

Residues Met1–Ala22 form the signal peptide.

This is an uncharacterized protein from Escherichia coli O157:H7.